A 124-amino-acid chain; its full sequence is Small ribosomal subunit protein uS12 (124 aa).

The residue at position 89 (aspartate 89) is a 3-methylthioaspartic acid. The disordered stretch occupies residues 103–124 (DTAGVKDRRQSRSKYGAKSPKE).

Belongs to the universal ribosomal protein uS12 family. As to quaternary structure, part of the 30S ribosomal subunit. Contacts proteins S8 and S17. May interact with IF1 in the 30S initiation complex.

With S4 and S5 plays an important role in translational accuracy. Functionally, interacts with and stabilizes bases of the 16S rRNA that are involved in tRNA selection in the A site and with the mRNA backbone. Located at the interface of the 30S and 50S subunits, it traverses the body of the 30S subunit contacting proteins on the other side and probably holding the rRNA structure together. The combined cluster of proteins S8, S12 and S17 appears to hold together the shoulder and platform of the 30S subunit. The chain is Small ribosomal subunit protein uS12 from Prochlorococcus marinus (strain NATL2A).